The chain runs to 507 residues: Iroquois-class homeodomain protein IRX-3 (507 aa).

Residues 19–39 (RPGAAGGGGGGSSAGGRSGPG) form a disordered region. The segment covering 22-39 (AAGGGGGGSSAGGRSGPG) has biased composition (gly residues). The homeobox; TALE-type DNA-binding region spans 130-192 (DPSRPKNATR…NARRRLKKEN (63 aa)). Disordered regions lie at residues 193–398 (KMTW…AAAA) and 416–468 (RPFP…SGTD). Acidic residues-rich tracts occupy residues 213–223 (REEEDEEEDEE) and 230–261 (EMEEEELAGEEEDTGGEGLADDDEDEEIDLEN). Composition is skewed to pro residues over residues 314-342 (APPPPPVARAPASPPSPPSSLDPCAPAPA) and 418-428 (FPGPPAGPRPH). A phosphoserine mark is found at Ser-326 and Ser-329. Over residues 436–460 (APQHLLGLPGAAGHPAAAAAAYARP) the composition is skewed to low complexity.

The protein belongs to the TALE/IRO homeobox family. In terms of tissue distribution, expressed by neural progenitor cells in discrete domains of the ventral neural tube. Also expressed in specific and overlapping patterns with Irx1 and Irx2 in the developing and adult metanephric kidney. In the adult metanephros, renal expression is confined to the S3 segment of the proximal tubule, in the loop of Henle.

The protein localises to the nucleus. Its function is as follows. Transcription factor involved in SHH-dependent neural patterning. Together with NKX2-2 and NKX6-1 acts to restrict the generation of motor neurons to the appropriate region of the neural tube. Belongs to the class I proteins of neuronal progenitor factors, which are repressed by SHH signals. Involved in the transcriptional repression of MNX1 in non-motor neuron cells. Acts as a regulator of energy metabolism. In Mus musculus (Mouse), this protein is Iroquois-class homeodomain protein IRX-3 (Irx3).